The following is a 463-amino-acid chain: Glutamate--tRNA ligase 1 (463 aa).

A 'HIGH' region motif is present at residues 10 to 20 (PSPTGYLHIGG). The 'KMSKS' region signature appears at 238 to 242 (KLSKR). ATP is bound at residue K241.

It belongs to the class-I aminoacyl-tRNA synthetase family. Glutamate--tRNA ligase type 1 subfamily. As to quaternary structure, monomer.

The protein resides in the cytoplasm. The enzyme catalyses tRNA(Glu) + L-glutamate + ATP = L-glutamyl-tRNA(Glu) + AMP + diphosphate. Catalyzes the attachment of glutamate to tRNA(Glu) in a two-step reaction: glutamate is first activated by ATP to form Glu-AMP and then transferred to the acceptor end of tRNA(Glu). The chain is Glutamate--tRNA ligase 1 from Helicobacter pylori (strain P12).